Consider the following 2332-residue polypeptide: Genome polyprotein (2332 aa).

The Peptidase C28 domain maps to Met1–Lys201. Residues Met1–Leu1480 lie on the Cytoplasmic side of the membrane. Residues Cys51, His148, and Asp163 each act as for leader protease activity in the active site. 2 disordered regions span residues Lys199 to Asn218 and Thr237 to Gln264. A lipid anchor (N-myristoyl glycine; by host) is attached at Gly202. Polar residues-rich tracts occupy residues Gly204 to Asn218 and Thr237 to Gly251. Over residues Ser252 to Gln264 the composition is skewed to low complexity. Positions Ala789–Tyr797 are antigenic epitope. The short motif at Arg867–Asp870 is the Cell attachment site element. One can recognise an SF3 helicase domain in the interval Asn1189 to Asp1353. Gly1217–Ser1224 contributes to the ATP binding site. The stretch at Lys1481–Ile1501 is an intramembrane region. Topologically, residues Arg1502–Ala2332 are cytoplasmic. Composition is skewed to basic and acidic residues over residues Lys1529 to Pro1538 and Phe1549 to Val1563. The segment at Lys1529–Gln1588 is disordered. O-(5'-phospho-RNA)-tyrosine occurs at positions 1581, 1604, and 1628. The region spanning Ala1652 to Leu1848 is the Peptidase C3 domain. Catalysis depends on His1695, which acts as the For protease 3C activity; Proton donor/acceptor. Active-site for protease 3C activity residues include Asp1733 and Cys1812. Positions Met1878–Thr1886 match the Nuclear localization signal motif. Positions Arg2096–Ala2214 constitute a RdRp catalytic domain. Asp2200 acts as the For RdRp activity in catalysis.

Belongs to the picornaviruses polyprotein family. As to quaternary structure, interacts with host ISG15. In terms of assembly, interacts (via R-G-D motif) with host ITGAV/ITGB6. Interacts with host MAVS; this interaction inhibits binding of host TRAF3 to MAVS, thereby suppressing interferon-mediated responses. Forms homooligomers. As to quaternary structure, homohexamer. Interacts with host VIM. Interacts with host BECN1. In terms of assembly, interacts with host DCTN3. Interacts with RNA-dependent RNA polymerase; this interaction allows 3B-1 to binds 2 polymerases and act as a primer. It also allows the recruitment of the RNA-dependent RNA polymerase to host membranes. As to quaternary structure, interacts with RNA-dependent RNA polymerase; this interaction allows 3B-2 to act as a primer. In terms of assembly, interacts with RNA-dependent RNA polymerase; this interaction allows 3B-3 to act as a primer. Interacts with 3B-1; this interaction allows 3B-1 to binds 2 polymerases and act as a primer. It also allows the recruitment of the RNA-dependent RNA polymerase to host membranes. Interacts with 3B-2; this interaction allows 3B-2 to act as a primer. Interacts with 3B-3; this interaction allows 3B-3 to act as a primer. Post-translationally, removes six residues from its own C-terminus, generating sLb(pro). In terms of processing, specific enzymatic cleavages in vivo by the viral proteases yield a variety of precursors and mature proteins. The polyprotein seems to be cotranslationally cleaved at the 2A/2B junction by a ribosomal skip from one codon to the next without formation of a peptide bond. This process would release the L-P1-2A peptide from the translational complex. During virion maturation, immature virions are rendered infectious following cleavage of VP0 into VP4 and VP2. This maturation seems to be an autocatalytic event triggered by the presence of RNA in the capsid and is followed by a conformational change of the particle. Post-translationally, myristoylation is required during RNA encapsidation and formation of the mature virus particle. In terms of processing, uridylylated by the polymerase and covalently linked to the 5'-end of genomic RNA. These uridylylated forms act as a nucleotide-peptide primer for the polymerase.

Its subcellular location is the host nucleus. It localises to the host cytoplasm. The protein localises to the virion. It is found in the host endoplasmic reticulum membrane. The protein resides in the host cytoplasmic vesicle membrane. The catalysed reaction is Autocatalytically cleaves itself from the polyprotein of the foot-and-mouth disease virus by hydrolysis of a Lys-|-Gly bond, but then cleaves host cell initiation factor eIF-4G at bonds -Gly-|-Arg- and -Lys-|-Arg-.. The enzyme catalyses a ribonucleoside 5'-triphosphate + H2O = a ribonucleoside 5'-diphosphate + phosphate + H(+). It carries out the reaction RNA(n) + a ribonucleoside 5'-triphosphate = RNA(n+1) + diphosphate. It catalyses the reaction Selective cleavage of Gln-|-Gly bond in the poliovirus polyprotein. In other picornavirus reactions Glu may be substituted for Gln, and Ser or Thr for Gly.. Autocatalytically cleaves itself from the polyprotein at the L/VP0 junction. Also cleaves the host translation initiation factors EIF4G1 and EIF4G3, in order to shut off the capped cellular mRNA transcription. Plays a role in counteracting host innate antiviral response using diverse mechanisms. Possesses a deubiquitinase activity acting on both 'Lys-48' and 'Lys-63'-linked polyubiquitin chains. In turn, inhibits the ubiquitination and subsequent activation of key signaling molecules of type I IFN response such as host RIGI, TBK1, TRAF3 and TRAF6. Inhibits host NF-kappa-B activity by inducing a decrease in RELA mRNA levels. Cleaves a peptide bond in the C-terminus of host ISG15, resulting in the damaging of this modifier that can no longer be attached to target proteins. Also cleaves host G3BP1 and G3BP2 in order to inhibit cytoplasmic stress granules assembly. Functionally, lies on the inner surface of the capsid shell. After binding to the host receptor, the capsid undergoes conformational changes. Capsid protein VP4 is released, capsid protein VP1 N-terminus is externalized, and together, they shape a pore in the host membrane through which the viral genome is translocated into the host cell cytoplasm. After genome has been released, the channel shrinks. In terms of biological role, forms an icosahedral capsid of pseudo T=3 symmetry with capsid proteins VP1 and VP3. The capsid is composed of 60 copies of each capsid protein organized in the form of twelve pentamers and encloses the viral positive strand RNA genome. Upon acidifcation in the endosome, dissociates into pentamers. Its function is as follows. Forms an icosahedral capsid of pseudo T=3 symmetry with capsid proteins VP2 and VP3. The capsid is composed of 60 copies of each capsid protein organized in the form of twelve pentamers and encloses the viral positive strand RNA genome. Mediates cell entry by attachment to an integrin receptor, usually host ITGAV/ITGB6. In addition, targets host MAVS to suppress type I IFN pathway. Upon acidifcation in the endosome, dissociates into pentamers. Forms an icosahedral capsid of pseudo T=3 symmetry with capsid proteins VP0 and VP3. The capsid is composed of 60 copies of each capsid protein organized in the form of twelve pentamers and encloses the viral positive strand RNA genome. Functionally, mediates self-processing of the polyprotein by a translational effect termed 'ribosome skipping'. Mechanistically, 2A-mediated cleavage occurs between the C-terminal glycine and the proline of the downstream protein 2B. In the case of foot-and-mouth disease virus, the 2A oligopeptide is post-translationally 'trimmed' from the C-terminus of the upstream protein 1D by 3C proteinase. In terms of biological role, plays an essential role in the virus replication cycle by acting as a viroporin. Creates a pore in the host endoplasmic reticulum and as a consequence releases Ca2+ in the cytoplasm of infected cell. In turn, high levels of cytoplasmic calcium may trigger membrane trafficking and transport of viral ER-associated proteins to viroplasms, sites of viral genome replication. Its function is as follows. Associates with and induces structural rearrangements of intracellular membranes. Triggers host autophagy by interacting with host BECN1 and thereby promotes viral replication. Participates in viral replication and interacts with host DHX9. Displays RNA-binding, nucleotide binding and NTPase activities. May play a role in virion morphogenesis and viral RNA encapsidation by interacting with the capsid protein VP3. Plays important roles in virus replication, virulence and host range. Cooperates with host DDX56 to inhibit IRF3 nuclear translocation and subsequent type I interferon production. Functionally, covalently linked to the 5'-end of both the positive-strand and negative-strand genomic RNAs. Acts as a genome-linked replication primer. In terms of biological role, covalently linked to the 5'-end0 of both the positive-strand and negative-strand genomic RNAs. Acts as a genome-linked replication primer. Its function is as follows. Cysteine protease that generates mature viral proteins from the precursor polyprotein. In addition to its proteolytic activity, binds to viral RNA and thus influences viral genome replication. RNA and substrate bind cooperatively to the protease. RNA-directed RNA polymerase 3D-POL replicates genomic and antigenomic RNA by recognizing replications specific signals. Covalently attaches UMP to a tyrosine of VPg, which is used to prime RNA synthesis. The positive stranded RNA genome is first replicated at virus induced membranous vesicles, creating a dsRNA genomic replication form. This dsRNA is then used as template to synthesize positive stranded RNA genomes. ss(+)RNA genomes are either translated, replicated or encapsidated. This is Genome polyprotein from Bos taurus (Bovine).